Here is a 780-residue protein sequence, read N- to C-terminus: LPS-assembly protein LptD (780 aa).

The N-terminal stretch at 1–24 (MKKRFPTLLATLIWTALYSQHTLA) is a signal peptide.

It belongs to the LptD family. In terms of assembly, component of the lipopolysaccharide transport and assembly complex. Interacts with LptE and LptA.

Its subcellular location is the cell outer membrane. Its function is as follows. Together with LptE, is involved in the assembly of lipopolysaccharide (LPS) at the surface of the outer membrane. This is LPS-assembly protein LptD from Yersinia pestis bv. Antiqua (strain Antiqua).